The primary structure comprises 248 residues: tRNA1(Val) (adenine(37)-N6)-methyltransferase (248 aa).

Belongs to the methyltransferase superfamily. tRNA (adenine-N(6)-)-methyltransferase family.

It is found in the cytoplasm. It catalyses the reaction adenosine(37) in tRNA1(Val) + S-adenosyl-L-methionine = N(6)-methyladenosine(37) in tRNA1(Val) + S-adenosyl-L-homocysteine + H(+). Specifically methylates the adenine in position 37 of tRNA(1)(Val) (anticodon cmo5UAC). This chain is tRNA1(Val) (adenine(37)-N6)-methyltransferase, found in Musicola paradisiaca (strain Ech703) (Dickeya paradisiaca).